The chain runs to 418 residues: Actin-related protein 3 (418 aa).

At A2 the chain carries N-acetylalanine. K240, K244, K251, and K254 each carry N6-acetyllysine.

Belongs to the actin family. ARP3 subfamily. As to quaternary structure, component of the Arp2/3 complex composed of ACTR2/ARP2, ACTR3/ARP3, ARPC1B/p41-ARC, ARPC2/p34-ARC, ARPC3/p21-ARC, ARPC4/p20-ARC and ARPC5/p16-ARC. Interacts with WHDC1. Interacts weakly with MEFV. Interacts with AVIL.

It localises to the cytoplasm. Its subcellular location is the cytoskeleton. It is found in the cell projection. The protein resides in the nucleus. In terms of biological role, ATP-binding component of the Arp2/3 complex, a multiprotein complex that mediates actin polymerization upon stimulation by nucleation-promoting factor (NPF). The Arp2/3 complex mediates the formation of branched actin networks in the cytoplasm, providing the force for cell motility. Seems to contact the pointed end of the daughter actin filament. In podocytes, required for the formation of lamellipodia downstream of AVIL and PLCE1 regulation. In addition to its role in the cytoplasmic cytoskeleton, the Arp2/3 complex also promotes actin polymerization in the nucleus, thereby regulating gene transcription and repair of damaged DNA. The Arp2/3 complex promotes homologous recombination (HR) repair in response to DNA damage by promoting nuclear actin polymerization, leading to drive motility of double-strand breaks (DSBs). Plays a role in ciliogenesis. This chain is Actin-related protein 3 (ACTR3), found in Bos taurus (Bovine).